An 896-amino-acid polypeptide reads, in one-letter code: MPGKEAAVNVMQSSTKSNTKKMVQARLPFKRLNPVPKDEGCLEEKKVRITKNVSPQKMLHSLNSSMEDMENDCDMETETVPIPKAVNGKGPLDNYIRKAPKVSHAPSITTIDLTEESNISISNDCPLNGESETHLANGTLALEESTPNLPLSAKEECTVSLENKTVENTHFSELKSDQLHQAAATSTSASNFSPERVVKEDCNSSADDDSASVSSSSSPVSLSSPDAQTGSQFRNRSSPSTSTTPTGKVTANKTSADKNKTKDKDKQRQAEKEERERAKKEARSAKKKKRQGLLKNLQRKRGKTSESSGKEYKKEKKEREDKEKAEKMKLKEEKKREKLEALEAKQEEKRKKDEEKRQKEEEKRQKEEEKRLKEEEKRVKAEKAEITRFFQKPKTPQAPKTFSRSCGKFAPFEIKKGMALAPLCRIDFEPEASEELDRFLQEQNSKIYFFDEIKKRKPRKMGQTTVPTVNSFEVDDVQVLGESDPVLGSNMLEGHIKDIGVPERKKFGRMKLLQFCENHRPAYWGTCNRRSRVINSRKPWAQDTGMLDYEVDSDEEWEEEEPGESLSHSEGENDDDPKEDDEDDDGFFVPHGYLSDDEGVSDEECTDPENQKFRQKLKAKEWYELQTNGKKIRAMQPVVIGCVWWDSKASEISLLQKFSACILESPAVDEELAQEISSAQSLKDRQILSKLVPLLHGNVNGSKIMIQEFQEYCRRGLFLEDNASDAAGNESTSPNVTPQTPSNIIVPSKARLKRLISENSVYEKRPDHRMCWYVHSDVLKGLQQDNLPVPCQWTYITQVNSVAKEDNGANGGSLQSLPLSGKRKSAGSMPITKFMKRAKDLETAINTDMDGFQADNEEDDDDCMILEDQQAKDAEDSTIECKINLNDSAVLASCQN.

3 disordered regions span residues 1–23 (MPGK…KKMV), 185–377 (TSTS…EEEK), and 552–610 (DSDE…DPEN). The span at 10–21 (VMQSSTKSNTKK) shows a compositional bias: polar residues. Residues 211–226 (ASVSSSSSPVSLSSPD) show a composition bias toward low complexity. Over residues 227–236 (AQTGSQFRNR) the composition is skewed to polar residues. Positions 237 to 246 (SSPSTSTTPT) are enriched in low complexity. Over residues 255-284 (SADKNKTKDKDKQRQAEKEERERAKKEARS) the composition is skewed to basic and acidic residues. The span at 285–302 (AKKKKRQGLLKNLQRKRG) shows a compositional bias: basic residues. Basic and acidic residues predominate over residues 308–377 (SGKEYKKEKK…EEKRLKEEEK (70 aa)). 3 stretches are compositionally biased toward acidic residues: residues 552 to 563 (DSDEEWEEEEPG), 572 to 586 (ENDD…DDDG), and 595 to 607 (SDDE…ECTD). Positions 642 to 678 (CVWWDSKASEISLLQKFSACILESPAVDEELAQEISS) are necessary for homodimerization, competence for chromatin assembly. A disordered region spans residues 724–743 (SDAAGNESTSPNVTPQTPSN). Positions 729–743 (NESTSPNVTPQTPSN) are enriched in polar residues.

This sequence belongs to the CHAF1A family. As to quaternary structure, homodimer.

The protein localises to the nucleus. Involved in chromatin assembly in DNA replication and DNA repair. The sequence is that of Chromatin assembly factor 1 subunit A-A (chaf1a-a) from Xenopus laevis (African clawed frog).